Here is a 60-residue protein sequence, read N- to C-terminus: Conotoxin Cl1.1 (60 aa).

A signal peptide spans 1–19 (MRCLPVIVILLLLISSAAA). Residues 20-48 (VVEGPLRVNRRLRPRKAPVDMQARDWNWG) constitute a propeptide that is removed on maturation.

The protein belongs to the conotoxin T superfamily. Contains 2 disulfide bonds. In terms of tissue distribution, expressed by the venom duct.

Its subcellular location is the secreted. The chain is Conotoxin Cl1.1 from Californiconus californicus (California cone).